The sequence spans 299 residues: Oxygen-dependent coproporphyrinogen-III oxidase (299 aa).

Ser92 is a binding site for substrate. The a divalent metal cation site is built by His96 and His106. The Proton donor role is filled by His106. Position 108 to 110 (108 to 110 (NVR)) interacts with substrate. The a divalent metal cation site is built by His145 and His175. Positions 240 to 275 (YVEFNLVWDRGTLFGLQTGGRTESILMSMPPLVRWE) are important for dimerization. Residue 258–260 (GGR) participates in substrate binding.

This sequence belongs to the aerobic coproporphyrinogen-III oxidase family. In terms of assembly, homodimer. It depends on a divalent metal cation as a cofactor.

It is found in the cytoplasm. The catalysed reaction is coproporphyrinogen III + O2 + 2 H(+) = protoporphyrinogen IX + 2 CO2 + 2 H2O. Its pathway is porphyrin-containing compound metabolism; protoporphyrin-IX biosynthesis; protoporphyrinogen-IX from coproporphyrinogen-III (O2 route): step 1/1. Involved in the heme biosynthesis. Catalyzes the aerobic oxidative decarboxylation of propionate groups of rings A and B of coproporphyrinogen-III to yield the vinyl groups in protoporphyrinogen-IX. The protein is Oxygen-dependent coproporphyrinogen-III oxidase of Salmonella typhi.